A 74-amino-acid chain; its full sequence is Invertase 3 (74 aa).

Residues 1–19 (MLLQAFIFLLAGFAAKISA) form the signal peptide. A glycan (N-linked (GlcNAc...) asparagine) is linked at asparagine 23. Residues 39 to 42 (WMND) and glutamine 60 contribute to the substrate site. Aspartate 42 is a catalytic residue. The N-linked (GlcNAc...) asparagine glycan is linked to asparagine 64.

This sequence belongs to the glycosyl hydrolase 32 family.

The enzyme catalyses Hydrolysis of terminal non-reducing beta-D-fructofuranoside residues in beta-D-fructofuranosides.. The chain is Invertase 3 (SUC3) from Saccharomyces cerevisiae (Baker's yeast).